We begin with the raw amino-acid sequence, 494 residues long: 1-aminocyclopropane-1-carboxylate synthase 2 (494 aa).

An N6-(pyridoxal phosphate)lysine modification is found at Lys-279. A disordered region spans residues 474–494 (NVLNSPHTMSPHSPLVRARTY). A compositionally biased stretch (polar residues) spans 475-484 (VLNSPHTMSP).

Belongs to the class-I pyridoxal-phosphate-dependent aminotransferase family. As to quaternary structure, homodimer. It depends on pyridoxal 5'-phosphate as a cofactor.

It catalyses the reaction S-adenosyl-L-methionine = 1-aminocyclopropane-1-carboxylate + S-methyl-5'-thioadenosine + H(+). The protein operates within alkene biosynthesis; ethylene biosynthesis via S-adenosyl-L-methionine; ethylene from S-adenosyl-L-methionine: step 1/2. In terms of biological role, catalyzes the formation of 1-aminocyclopropane-1-carboxylate, a direct precursor of ethylene in higher plants. The sequence is that of 1-aminocyclopropane-1-carboxylate synthase 2 (ACS2) from Cucurbita pepo (Vegetable marrow).